The chain runs to 510 residues: Leucine-rich repeat-containing protein 53 (510 aa).

LRR repeat units follow at residues 34-55 (TTRVLIITDGYLSSIESTNLSL), 58-79 (NLALLSLSRNGIEDVQEDALDG), 82-102 (MLRTLLLEHNQISSSSLTDHT), 108-129 (SLQVLVLSNNALRTLRGSWFRN), 132-153 (GLTRLQLDGNQITNLTDSSFGG), 158-179 (SLRHLDLSNNFISYIGKDAFRP), and 182-203 (QLQEVDLSRNRLAHMPDVFTPL). Residues 214–271 (NQWSCTCDLHPLARFLRNYIKSSAHTLRNAKDLNCQPSTAAVAAAQSVLRLSETNCDP) enclose the LRRCT domain. A helical membrane pass occupies residues 294–314 (LLTVLGFAGAVGLTCLGLVVF).

It localises to the membrane. The sequence is that of Leucine-rich repeat-containing protein 53 (LRRC53) from Macaca fascicularis (Crab-eating macaque).